The sequence spans 24 residues: Brevinin-1BYb (24 aa).

A disulfide bridge connects residues cysteine 18 and cysteine 24.

As to expression, expressed by the skin glands.

It localises to the secreted. Functionally, antibacterial activity against Gram-positive bacterium S.aureus and Gram-negative bacterium E.coli. Has moderate antifungal activity against C.albicans and strong hemolytic activity. The polypeptide is Brevinin-1BYb (Rana boylii (Foothill yellow-legged frog)).